The chain runs to 298 residues: Epimerase family protein SSP1921 (298 aa).

This sequence belongs to the NAD(P)-dependent epimerase/dehydratase family. SDR39U1 subfamily.

The chain is Epimerase family protein SSP1921 from Staphylococcus saprophyticus subsp. saprophyticus (strain ATCC 15305 / DSM 20229 / NCIMB 8711 / NCTC 7292 / S-41).